A 628-amino-acid polypeptide reads, in one-letter code: Otolith matrix protein OMM-64 (628 aa).

The signal sequence occupies residues methionine 1–serine 20. Residues lysine 43–serine 628 form a disordered region. The segment covering aspartate 78–aspartate 93 has biased composition (low complexity). Residues threonine 182 to threonine 214 show a composition bias toward polar residues. 3 stretches are compositionally biased toward basic and acidic residues: residues glutamate 246 to lysine 266, glutamate 276 to aspartate 285, and arginine 311 to alanine 343. An N-linked (GlcNAc...) asparagine glycan is attached at asparagine 318. 5 stretches are compositionally biased toward acidic residues: residues aspartate 449 to proline 462, glutamate 477 to aspartate 489, aspartate 514 to aspartate 536, aspartate 544 to proline 556, and aspartate 565 to glutamate 578. Residues alanine 613–serine 628 show a composition bias toward low complexity.

In terms of tissue distribution, specifically expressed in otolith matrix-producing cells.

It is found in the secreted. It localises to the extracellular space. The protein localises to the extracellular matrix. In terms of biological role, calcium-binding component of otoliths, a calcium carbonate structure of the inner ear involved in hearing and balance sensing. Binds calcium. In Oncorhynchus mykiss (Rainbow trout), this protein is Otolith matrix protein OMM-64.